The primary structure comprises 835 residues: Adhesion G protein-coupled receptor E5 (835 aa).

Positions 1–20 (MGGRVFLAFCVWLTLPGAET) are cleaved as a signal peptide. The Extracellular segment spans residues 21 to 552 (QDSRGCARWC…EDWKLTLITR (532 aa)). The region spanning 22-63 (DSRGCARWCPQNSSCVNATACRCNPGFSSFSEIITTPTETCD) is the EGF-like 1 domain. Intrachain disulfides connect Cys-26–Cys-36, Cys-30–Cys-42, Cys-44–Cys-62, Cys-68–Cys-82, Cys-76–Cys-91, Cys-93–Cys-114, Cys-120–Cys-133, Cys-127–Cys-142, Cys-144–Cys-158, Cys-164–Cys-177, Cys-171–Cys-186, Cys-188–Cys-207, Cys-213–Cys-226, Cys-220–Cys-235, and Cys-237–Cys-256. 2 N-linked (GlcNAc...) asparagine glycosylation sites follow: Asn-33 and Asn-38. In terms of domain architecture, EGF-like 2; calcium-binding spans 64 to 115 (DINECATPSKVSCGKFSDCWNTEGSYDCVCSPGYEPVSGAKTFKNESENTCQ). An N-linked (GlcNAc...) asparagine glycan is attached at Asn-108. An EGF-like 3; calcium-binding domain is found at 116–159 (DVDECQQNPRLCKSYGTCVNTLGSYTCQCLPGFKFIPEDPKVCT). The EGF-like 4; calcium-binding domain occupies 160 to 208 (DVNECTSGQNPCHSSTHCLNNVGSYQCRCRPGWQPIPGSPNGPNNTVCE). The N-linked (GlcNAc...) asparagine glycan is linked to Asn-203. The region spanning 209-257 (DVDECSSGQHQCDSSTVCFNTVGSYSCRCRPGWKPRHGIPNNQKDTVCE) is the EGF-like 5; calcium-binding domain. The GAIN-B domain occupies 349-543 (PFTYISPSNT…AILMAHYDVE (195 aa)). N-linked (GlcNAc...) asparagine glycans are attached at residues Asn-371, Asn-406, Asn-413, Asn-453, and Asn-520. 2 disulfides stabilise this stretch: Cys-495-Cys-525 and Cys-513-Cys-527. Residues 495-543 (CAFWKSDSDRGGHWATEGCQVLGSKNGSTTCQCSHLSSFAILMAHYDVE) form a GPS region. A helical transmembrane segment spans residues 553-572 (VGLALSLFCLLLCILTFLLV). Topologically, residues 573–581 (RPIQGSRTT) are cytoplasmic. The helical transmembrane segment at 582 to 601 (IHLHLCICLFVGSTIFLAGI) threads the bilayer. Over 602–620 (ENEGGQVGLRCRLVAGLLH) the chain is Extracellular. Residues 621-642 (YCFLAAFCWMSLEGLELYFLVV) traverse the membrane as a helical segment. At 643-653 (RVFQGQGLSTR) the chain is on the cytoplasmic side. Residues 654–674 (WLCLIGYGVPLLIVGVSAAIY) traverse the membrane as a helical segment. Topologically, residues 675–691 (SKGYGRPRYCWLDFEQG) are extracellular. The chain crosses the membrane as a helical span at residues 692-712 (FLWSFLGPVTFIILCNAVIFV). Topologically, residues 713–739 (TTVWKLTQKFSEINPDMKKLKKARALT) are cytoplasmic. A helical membrane pass occupies residues 740–760 (ITAIAQLFLLGCTWVFGLFIF). Topologically, residues 761–766 (DDRSLV) are extracellular. A helical transmembrane segment spans residues 767–789 (LTYVFTILNCLQGAFLYLLHCLL). At 790 to 835 (NKKVREEYRKWACLVAGGSKYSEFTSTTSGTGHNQTRALRASESGI) the chain is on the cytoplasmic side. Polar residues predominate over residues 814 to 826 (TSTTSGTGHNQTR). The tract at residues 814 to 835 (TSTTSGTGHNQTRALRASESGI) is disordered. Ser-815 carries the post-translational modification Phosphoserine. Residue Thr-816 is modified to Phosphothreonine. Ser-818 carries the phosphoserine modification. Residue Thr-825 is modified to Phosphothreonine. Phosphoserine is present on residues Ser-831 and Ser-833.

This sequence belongs to the G-protein coupled receptor 2 family. LN-TM7 subfamily. In terms of assembly, forms a heterodimer, consisting of a large extracellular region (alpha subunit) non-covalently linked to a seven-transmembrane moiety (beta subunit). Interacts with complement decay-accelerating factor (DAF). The largest isoform (isoform 1) interacts with chondroitin sulfate. In terms of processing, proteolytically cleaved into 2 subunits, an extracellular alpha subunit and a seven-transmembrane subunit. As to expression, broadly expressed, found on most hematopoietic cells, including activated lymphocytes, monocytes, macrophages, dendritic cells, and granulocytes. Expressed also abundantly by smooth muscle cells. Expressed in thyroid, colorectal, gastric, esophageal and pancreatic carcinomas too. Expression are increased under inflammatory conditions in the CNS of multiple sclerosis and in synovial tissue of patients with rheumatoid arthritis. Increased expression of CD97 in the synovium is accompanied by detectable levels of soluble CD97 in the synovial fluid.

The protein resides in the cell membrane. It localises to the secreted. It is found in the extracellular space. Receptor potentially involved in both adhesion and signaling processes early after leukocyte activation. Plays an essential role in leukocyte migration. This chain is Adhesion G protein-coupled receptor E5, found in Homo sapiens (Human).